A 182-amino-acid chain; its full sequence is Dual-action ribosomal maturation protein DarP (182 aa).

It belongs to the DarP family.

The protein localises to the cytoplasm. Functionally, member of a network of 50S ribosomal subunit biogenesis factors which assembles along the 30S-50S interface, preventing incorrect 23S rRNA structures from forming. Promotes peptidyl transferase center (PTC) maturation. This Yersinia pestis protein is Dual-action ribosomal maturation protein DarP.